The primary structure comprises 541 residues: ATP synthase subunit alpha (541 aa).

An ATP-binding site is contributed by 169-176 (GDRQTGKT). A disordered region spans residues 506–541 (NTLLNVEEGDTGEEENNEGHNKAEQDTEEKDTEEVV). Composition is skewed to acidic residues over residues 512-521 (EEGDTGEEEN) and 531-541 (DTEEKDTEEVV).

Belongs to the ATPase alpha/beta chains family. In terms of assembly, F-type ATPases have 2 components, CF(1) - the catalytic core - and CF(0) - the membrane proton channel. CF(1) has five subunits: alpha(3), beta(3), gamma(1), delta(1), epsilon(1). CF(0) has three main subunits: a(1), b(2) and c(9-12). The alpha and beta chains form an alternating ring which encloses part of the gamma chain. CF(1) is attached to CF(0) by a central stalk formed by the gamma and epsilon chains, while a peripheral stalk is formed by the delta and b chains.

The protein localises to the cell inner membrane. It catalyses the reaction ATP + H2O + 4 H(+)(in) = ADP + phosphate + 5 H(+)(out). Functionally, produces ATP from ADP in the presence of a proton gradient across the membrane. The alpha chain is a regulatory subunit. This is ATP synthase subunit alpha from Halothermothrix orenii (strain H 168 / OCM 544 / DSM 9562).